The following is a 113-amino-acid chain: U11-theraphotoxin-Hhn1a (113 aa).

A signal peptide spans 1 to 21; it reads MNTVRVTFLLVFVLAVSLGQA. Residues 22–74 constitute a propeptide that is removed on maturation; it reads DKDENRMEMQEKTEQGKGYLDFAENLLPQKLEELEAKLLEEDSEESRNSRQKR. A compositionally biased stretch (basic and acidic residues) spans 59–69; the sequence is LLEEDSEESRN. Positions 59–83 are disordered; that stretch reads LLEEDSEESRNSRQKRCIGEGVPCD. Disulfide bonds link Cys-75-Cys-90, Cys-82-Cys-95, and Cys-89-Cys-110.

This sequence belongs to the neurotoxin 14 (magi-1) family. 01 (HNTX-16) subfamily. Expressed by the venom gland.

Its subcellular location is the secreted. Functionally, probable ion channel inhibitor. The sequence is that of U11-theraphotoxin-Hhn1a from Cyriopagopus hainanus (Chinese bird spider).